The sequence spans 319 residues: Epoxyqueuosine reductase (319 aa).

Asp128 acts as the Proton donor in catalysis. The 4Fe-4S ferredoxin-type domain occupies 173–202 (EANDPHPNYCGTCTRCLSACPTAALVEPAV). Cys182, Cys185, Cys188, Cys192, Cys208, Cys236, Cys239, and Cys243 together coordinate [4Fe-4S] cluster.

The protein belongs to the QueG family. As to quaternary structure, monomer. Cob(II)alamin serves as cofactor. Requires [4Fe-4S] cluster as cofactor.

It is found in the cytoplasm. It carries out the reaction epoxyqueuosine(34) in tRNA + AH2 = queuosine(34) in tRNA + A + H2O. Its pathway is tRNA modification; tRNA-queuosine biosynthesis. Its function is as follows. Catalyzes the conversion of epoxyqueuosine (oQ) to queuosine (Q), which is a hypermodified base found in the wobble positions of tRNA(Asp), tRNA(Asn), tRNA(His) and tRNA(Tyr). This Gloeobacter violaceus (strain ATCC 29082 / PCC 7421) protein is Epoxyqueuosine reductase.